A 372-amino-acid polypeptide reads, in one-letter code: Dual-specificity RNA methyltransferase RlmN (372 aa).

The active-site Proton acceptor is Glu-93. Positions 99 to 338 (EKDRATLCIS…VTVRKTRGDD (240 aa)) constitute a Radical SAM core domain. Cys-106 and Cys-343 are disulfide-bonded. Residues Cys-113, Cys-117, and Cys-120 each contribute to the [4Fe-4S] cluster site. S-adenosyl-L-methionine contacts are provided by residues 167–168 (GE), Ser-199, 221–223 (SLH), and Asn-300. Residue Cys-343 is the S-methylcysteine intermediate of the active site.

The protein belongs to the radical SAM superfamily. RlmN family. [4Fe-4S] cluster is required as a cofactor.

It localises to the cytoplasm. It catalyses the reaction adenosine(2503) in 23S rRNA + 2 reduced [2Fe-2S]-[ferredoxin] + 2 S-adenosyl-L-methionine = 2-methyladenosine(2503) in 23S rRNA + 5'-deoxyadenosine + L-methionine + 2 oxidized [2Fe-2S]-[ferredoxin] + S-adenosyl-L-homocysteine. The catalysed reaction is adenosine(37) in tRNA + 2 reduced [2Fe-2S]-[ferredoxin] + 2 S-adenosyl-L-methionine = 2-methyladenosine(37) in tRNA + 5'-deoxyadenosine + L-methionine + 2 oxidized [2Fe-2S]-[ferredoxin] + S-adenosyl-L-homocysteine. Specifically methylates position 2 of adenine 2503 in 23S rRNA and position 2 of adenine 37 in tRNAs. m2A2503 modification seems to play a crucial role in the proofreading step occurring at the peptidyl transferase center and thus would serve to optimize ribosomal fidelity. This chain is Dual-specificity RNA methyltransferase RlmN, found in Psychromonas ingrahamii (strain DSM 17664 / CCUG 51855 / 37).